A 319-amino-acid polypeptide reads, in one-letter code: MSLNFLDFEQPIAELEAKIDSLTAVSRQDEKLDINLDEEVQRLREKSVELTRKIFSDLGAWQIAQLARHPMRPYTLDYVRHIFTDFDELAGDRAYADDKAIVGGIARLDSRPVMIIGHQKGRETKEKIRRNFGMPAPEGYRKALRLMEMADRFNLPLFTFIDTPGAYPGVGAEERGQSEAIAKNLREMSGLRVPVICTVIGEGGSGGALAIGVGDKVNMLQYSTYSVISPEGCASILWKSADKAPIAAEAMGIIASRLKELELIDSIVPEPLGGAHRDVQAIAASLKAQLLDDLSELDGLNTEELLNRRYHRLMNYGYC.

Residues 35-296 enclose the CoA carboxyltransferase C-terminal domain; that stretch reads NLDEEVQRLR…KAQLLDDLSE (262 aa).

Belongs to the AccA family. As to quaternary structure, acetyl-CoA carboxylase is a heterohexamer composed of biotin carboxyl carrier protein (AccB), biotin carboxylase (AccC) and two subunits each of ACCase subunit alpha (AccA) and ACCase subunit beta (AccD).

Its subcellular location is the cytoplasm. The catalysed reaction is N(6)-carboxybiotinyl-L-lysyl-[protein] + acetyl-CoA = N(6)-biotinyl-L-lysyl-[protein] + malonyl-CoA. It participates in lipid metabolism; malonyl-CoA biosynthesis; malonyl-CoA from acetyl-CoA: step 1/1. Functionally, component of the acetyl coenzyme A carboxylase (ACC) complex. First, biotin carboxylase catalyzes the carboxylation of biotin on its carrier protein (BCCP) and then the CO(2) group is transferred by the carboxyltransferase to acetyl-CoA to form malonyl-CoA. This Sodalis glossinidius (strain morsitans) protein is Acetyl-coenzyme A carboxylase carboxyl transferase subunit alpha.